Here is a 101-residue protein sequence, read N- to C-terminus: Large ribosomal subunit protein bL28 (101 aa).

The protein belongs to the bacterial ribosomal protein bL28 family.

The protein is Large ribosomal subunit protein bL28 of Methylorubrum extorquens (strain CM4 / NCIMB 13688) (Methylobacterium extorquens).